We begin with the raw amino-acid sequence, 377 residues long: TelA-like protein SSP1345 (377 aa).

Over residues 1–18 the composition is skewed to basic and acidic residues; sequence MAREQDSINSHPLDKYID. The interval 1-39 is disordered; it reads MAREQDSINSHPLDKYIDENSANESEIIKSSSQFSHEDQ. The span at 20 to 34 shows a compositional bias: polar residues; sequence NSANESEIIKSSSQF.

This sequence belongs to the TelA family.

The protein is TelA-like protein SSP1345 of Staphylococcus saprophyticus subsp. saprophyticus (strain ATCC 15305 / DSM 20229 / NCIMB 8711 / NCTC 7292 / S-41).